We begin with the raw amino-acid sequence, 3364 residues long: Salivary gland surface protein 1 (3364 aa).

2 beta-propeller regions span residues 1–344 and 705–1216; these read MLRI…VVDA and FEQE…LKAL. N-linked (GlcNAc...) asparagine glycosylation is present at Asn-59. Intrachain disulfides connect Cys-251–Cys-297 and Cys-1128–Cys-1139. Residues 345–2733 form a rhs/YD-repeats region; it reads VEPKLDQGSP…PVSQIDPDGQ (2389 aa). An N-linked (GlcNAc...) asparagine glycan is attached at Asn-1149. A carbohydrate-binding module (CBM) region spans residues 1345 to 1494; the sequence is NQELVQFLGF…VHVDHVRLSP (150 aa). Residues 1575–1715 form a lectin carbohydrate-recognition domain (lectin-CRD) region; that stretch reads HSWVESFSPY…VGIKDVIVME (141 aa). The interval 2225-2304 is wedge domain; that stretch reads HDKCDQNLIP…SEKMLEQGYP (80 aa). Cystine bridges form between Cys-2253/Cys-2285 and Cys-2407/Cys-2421. A run of 5 helical transmembrane segments spans residues 2734-2754, 2774-2794, 2805-2825, 2844-2864, and 2878-2898; these read IAVT…LGAA, IGLF…AATF, MIAG…LGAA, WNGL…FVGI, and MIYA…GGGM. The tox-SGS stretch occupies residues 3126–3216; sequence YSPDSDGNQI…ARIAPAALRN (91 aa).

Probably cleaved at the C-terminus. Female saliva (at protein level). Female salivary gland (at protein level). Not detected in female carcass without salivary glands. Not detected in male tissues.

Its subcellular location is the cell membrane. It is found in the secreted. Its function is as follows. (Microbial infection) Facilitates, but is not essential for, invasion of salivary glands by Plasmodium gallinaceum. Plays a role in Plasmodium gallinaceum oocyst development in mosquito midgut. (Microbial infection) Probably facilitates Zika virus replication in salivary glands. The polypeptide is Salivary gland surface protein 1 (Aedes aegypti (Yellowfever mosquito)).